The sequence spans 268 residues: Putative ABC transporter ATP-binding protein LMOf2365_1216 (268 aa).

Residues 2-237 (LKTEHISFQY…KSNVEQAGLV (236 aa)) form the ABC transporter domain. 35–42 (GANGSGKS) is a binding site for ATP.

This sequence belongs to the ABC transporter superfamily.

The protein resides in the cell membrane. In terms of biological role, probably part of an ABC transporter complex. Responsible for energy coupling to the transport system. The protein is Putative ABC transporter ATP-binding protein LMOf2365_1216 of Listeria monocytogenes serotype 4b (strain F2365).